The chain runs to 452 residues: Protein phosphatase 1F (452 aa).

The PPM-type phosphatase domain maps to 153–410; sequence LVSIHAIRNT…DNITVMVVFL (258 aa). Mn(2+)-binding residues include Asp-195, Gly-196, Asp-357, and Asp-401. A Phosphoserine modification is found at Ser-452.

This sequence belongs to the PP2C family. Associates with FEM1B. Mg(2+) is required as a cofactor. It depends on Mn(2+) as a cofactor. In terms of tissue distribution, expressed in the liver.

It catalyses the reaction O-phospho-L-seryl-[protein] + H2O = L-seryl-[protein] + phosphate. The enzyme catalyses O-phospho-L-threonyl-[protein] + H2O = L-threonyl-[protein] + phosphate. Its function is as follows. Dephosphorylates and concomitantly deactivates CaM-kinase II activated upon autophosphorylation, and CaM-kinases IV and I activated upon phosphorylation by CaM-kinase kinase. Promotes apoptosis. The polypeptide is Protein phosphatase 1F (Ppm1f) (Mus musculus (Mouse)).